Reading from the N-terminus, the 193-residue chain is Potassium-transporting ATPase KdpC subunit (193 aa).

A helical transmembrane segment spans residues 14-34 (ITFTFLVLCGLVYPLIVTGIA).

Belongs to the KdpC family. In terms of assembly, the system is composed of three essential subunits: KdpA, KdpB and KdpC.

The protein localises to the cell membrane. Its function is as follows. Part of the high-affinity ATP-driven potassium transport (or Kdp) system, which catalyzes the hydrolysis of ATP coupled with the electrogenic transport of potassium into the cytoplasm. This subunit acts as a catalytic chaperone that increases the ATP-binding affinity of the ATP-hydrolyzing subunit KdpB by the formation of a transient KdpB/KdpC/ATP ternary complex. The chain is Potassium-transporting ATPase KdpC subunit from Bacillus cereus (strain Q1).